The following is a 584-amino-acid chain: 2-succinyl-5-enolpyruvyl-6-hydroxy-3-cyclohexene-1-carboxylate synthase (584 aa).

Residues T563–V584 are disordered. The span at E566 to D577 shows a compositional bias: basic and acidic residues.

The protein belongs to the TPP enzyme family. MenD subfamily. Homodimer. The cofactor is Mg(2+). Requires Mn(2+) as cofactor. It depends on thiamine diphosphate as a cofactor.

It carries out the reaction isochorismate + 2-oxoglutarate + H(+) = 5-enolpyruvoyl-6-hydroxy-2-succinyl-cyclohex-3-ene-1-carboxylate + CO2. It participates in quinol/quinone metabolism; 1,4-dihydroxy-2-naphthoate biosynthesis; 1,4-dihydroxy-2-naphthoate from chorismate: step 2/7. The protein operates within quinol/quinone metabolism; menaquinone biosynthesis. In terms of biological role, catalyzes the thiamine diphosphate-dependent decarboxylation of 2-oxoglutarate and the subsequent addition of the resulting succinic semialdehyde-thiamine pyrophosphate anion to isochorismate to yield 2-succinyl-5-enolpyruvyl-6-hydroxy-3-cyclohexene-1-carboxylate (SEPHCHC). The chain is 2-succinyl-5-enolpyruvyl-6-hydroxy-3-cyclohexene-1-carboxylate synthase from Halobacterium salinarum (strain ATCC 29341 / DSM 671 / R1).